The following is a 192-amino-acid chain: Acireductone dioxygenase 2 (192 aa).

The Fe(2+) site is built by H99, H101, E105, and H144. Residues H99, H101, E105, and H144 each contribute to the Ni(2+) site.

It belongs to the acireductone dioxygenase (ARD) family. Fe(2+) is required as a cofactor. Requires Ni(2+) as cofactor.

It is found in the cytoplasm. It localises to the nucleus. The catalysed reaction is 1,2-dihydroxy-5-(methylsulfanyl)pent-1-en-3-one + O2 = 4-methylsulfanyl-2-oxobutanoate + formate + 2 H(+). The enzyme catalyses 1,2-dihydroxy-5-(methylsulfanyl)pent-1-en-3-one + O2 = 3-(methylsulfanyl)propanoate + CO + formate + 2 H(+). It participates in amino-acid biosynthesis; L-methionine biosynthesis via salvage pathway; L-methionine from S-methyl-5-thio-alpha-D-ribose 1-phosphate: step 5/6. Functionally, catalyzes 2 different reactions between oxygen and the acireductone 1,2-dihydroxy-3-keto-5-methylthiopentene (DHK-MTPene) depending upon the metal bound in the active site. Fe-containing acireductone dioxygenase (Fe-ARD) produces formate and 2-keto-4-methylthiobutyrate (KMTB), the alpha-ketoacid precursor of methionine in the methionine recycle pathway. Ni-containing acireductone dioxygenase (Ni-ARD) produces methylthiopropionate, carbon monoxide and formate, and does not lie on the methionine recycle pathway. This Arabidopsis thaliana (Mouse-ear cress) protein is Acireductone dioxygenase 2 (ARD2).